Reading from the N-terminus, the 141-residue chain is ATP synthase epsilon chain 1 (141 aa).

This sequence belongs to the ATPase epsilon chain family. As to quaternary structure, F-type ATPases have 2 components, CF(1) - the catalytic core - and CF(0) - the membrane proton channel. CF(1) has five subunits: alpha(3), beta(3), gamma(1), delta(1), epsilon(1). CF(0) has three main subunits: a, b and c.

Its subcellular location is the cell inner membrane. In terms of biological role, produces ATP from ADP in the presence of a proton gradient across the membrane. The chain is ATP synthase epsilon chain 1 from Thiobacillus denitrificans (strain ATCC 25259 / T1).